Reading from the N-terminus, the 242-residue chain is Myogenic factor 6 (242 aa).

The segment at 31–63 (SPLYPGSDGTLSPCQDQMPPEAGSDSSGEEHVL) is disordered. Positions 93-144 (DRRKAATLRERRRLKKINEAFEALKRRTVANPNQRLPKVEILRSAISYIERL) constitute a bHLH domain.

As to quaternary structure, efficient DNA binding requires dimerization with another bHLH protein. Interacts with CSRP3. As to expression, skeletal muscle.

Its subcellular location is the nucleus. Its function is as follows. Involved in muscle differentiation (myogenic factor). Induces fibroblasts to differentiate into myoblasts. Probable sequence specific DNA-binding protein. This chain is Myogenic factor 6 (MYF6), found in Homo sapiens (Human).